The sequence spans 303 residues: Probable 5-dehydro-4-deoxyglucarate dehydratase (303 aa).

The protein belongs to the DapA family.

The catalysed reaction is 5-dehydro-4-deoxy-D-glucarate + H(+) = 2,5-dioxopentanoate + CO2 + H2O. It functions in the pathway carbohydrate acid metabolism; D-glucarate degradation; 2,5-dioxopentanoate from D-glucarate: step 2/2. In Pseudomonas putida (strain GB-1), this protein is Probable 5-dehydro-4-deoxyglucarate dehydratase.